Reading from the N-terminus, the 102-residue chain is Urease subunit beta (102 aa).

It belongs to the urease beta subunit family. As to quaternary structure, heterotrimer of UreA (gamma), UreB (beta) and UreC (alpha) subunits. Three heterotrimers associate to form the active enzyme.

It localises to the cytoplasm. It carries out the reaction urea + 2 H2O + H(+) = hydrogencarbonate + 2 NH4(+). It functions in the pathway nitrogen metabolism; urea degradation; CO(2) and NH(3) from urea (urease route): step 1/1. This chain is Urease subunit beta, found in Acinetobacter baumannii (strain ACICU).